We begin with the raw amino-acid sequence, 750 residues long: 1,4-alpha-glucan branching enzyme GlgB (750 aa).

Aspartate 425 (nucleophile) is an active-site residue. Residue glutamate 478 is the Proton donor of the active site.

It belongs to the glycosyl hydrolase 13 family. GlgB subfamily. As to quaternary structure, monomer.

The catalysed reaction is Transfers a segment of a (1-&gt;4)-alpha-D-glucan chain to a primary hydroxy group in a similar glucan chain.. The protein operates within glycan biosynthesis; glycogen biosynthesis. In terms of biological role, catalyzes the formation of the alpha-1,6-glucosidic linkages in glycogen by scission of a 1,4-alpha-linked oligosaccharide from growing alpha-1,4-glucan chains and the subsequent attachment of the oligosaccharide to the alpha-1,6 position. The chain is 1,4-alpha-glucan branching enzyme GlgB from Cupriavidus pinatubonensis (strain JMP 134 / LMG 1197) (Cupriavidus necator (strain JMP 134)).